Here is a 447-residue protein sequence, read N- to C-terminus: Alpha-1,3-mannosyl-glycoprotein 2-beta-N-acetylglucosaminyltransferase (447 aa).

At 1-6 (MLKKQT) the chain is on the cytoplasmic side. A helical; Signal-anchor for type II membrane protein transmembrane segment spans residues 7-29 (AGLVLWGAIIFVGWNALLLLFFW). At 30–447 (TRPAPGRLPS…TWTGYDPSWN (418 aa)) the chain is on the lumenal side. A disulfide bond links cysteine 115 and cysteine 145. Residues arginine 117, aspartate 144, histidine 190, and aspartate 212 each contribute to the substrate site. Mn(2+) is bound at residue aspartate 213. Cysteine 239 and cysteine 305 are joined by a disulfide. Residue aspartate 291 is the Proton acceptor of the active site. Serine 322 provides a ligand contact to substrate.

The protein belongs to the glycosyltransferase 13 family. As to quaternary structure, interacts with MGAT4D. Interacts with BRI3. The cofactor is Mn(2+). In terms of tissue distribution, detected in kidney, liver and brain.

Its subcellular location is the golgi apparatus membrane. It is found in the cytoplasm. It localises to the perinuclear region. The catalysed reaction is N(4)-(alpha-D-Man-(1-&gt;3)-[alpha-D-Man-(1-&gt;3)-[alpha-D-Man-(1-&gt;6)]-alpha-D-Man-(1-&gt;6)]-beta-D-Man-(1-&gt;4)-beta-D-GlcNAc-(1-&gt;4)-beta-D-GlcNAc)-L-asparaginyl-[protein] (N-glucan mannose isomer 5A1,2) + UDP-N-acetyl-alpha-D-glucosamine = N(4)-{beta-D-GlcNAc-(1-&gt;2)-alpha-D-Man-(1-&gt;3)-[alpha-D-Man-(1-&gt;3)-[alpha-D-Man-(1-&gt;6)]-alpha-D-Man-(1-&gt;6)]-beta-D-Man-(1-&gt;4)-beta-D-GlcNAc-(1-&gt;4)-beta-D-GlcNAc}-L-asparaginyl-[protein] + UDP + H(+). Its pathway is protein modification; protein glycosylation. Functionally, initiates complex N-linked carbohydrate formation. Essential for the conversion of high-mannose to hybrid and complex N-glycans. The chain is Alpha-1,3-mannosyl-glycoprotein 2-beta-N-acetylglucosaminyltransferase (Mgat1) from Mus musculus (Mouse).